The sequence spans 64 residues: Weak toxin CM-9a (64 aa).

Disulfide bonds link C3/C24, C6/C11, C17/C41, C45/C56, and C57/C62.

This sequence belongs to the three-finger toxin family. Ancestral subfamily. Orphan group II sub-subfamily. As to expression, expressed by the venom gland.

The protein resides in the secreted. Its function is as follows. Binds with low affinity to muscular (alpha-1-beta-1-delta-epsilon/CHRNA1-CHRNB1-CHRND-CHRNE) and very low affinity to neuronal (alpha-7/CHRNA7) nicotinic acetylcholine receptor (nAChR). This is Weak toxin CM-9a from Naja kaouthia (Monocled cobra).